The following is a 490-amino-acid chain: Histone-lysine N-methyltransferase Smyd1 (490 aa).

Residues 7–253 (ENVEVFTSEG…EGEELTVSYI (247 aa)) form the SET domain. Residue 17–19 (KGR) coordinates S-adenosyl-L-methionine. Residues Cys-52, Cys-55, Cys-65, Cys-68, Cys-74, Cys-78, His-86, and Cys-90 each coordinate Zn(2+). The MYND-type zinc-finger motif lies at 52–90 (CHTCFKRQEKLHRCGQCKFAHYCDRTCQKDAWLNHKNEC). S-adenosyl-L-methionine-binding positions include His-135 and 205–206 (NH). Position 208 (Cys-208) interacts with Zn(2+). An S-adenosyl-L-methionine-binding site is contributed by 270 to 272 (YYF). Residues Cys-274, Cys-276, and Cys-279 each coordinate Zn(2+).

The protein belongs to the class V-like SAM-binding methyltransferase superfamily. In terms of assembly, interacts with HDAC1, HDAC2 and HDAC3. Interacts (via MYND-type zinc finger) with NACA isoform skNAC. In terms of tissue distribution, expressed in cardiac and skeletal muscle, lymphocytes and thymus.

The protein resides in the cytoplasm. It localises to the nucleus. The catalysed reaction is L-lysyl(4)-[histone H3] + 3 S-adenosyl-L-methionine = N(6),N(6),N(6)-trimethyl-L-lysyl(4)-[histone H3] + 3 S-adenosyl-L-homocysteine + 3 H(+). Methylates histone H3 at 'Lys-4' (H3K4me). Acts as a transcriptional repressor. Essential for cardiomyocyte differentiation and cardiac morphogenesis. The polypeptide is Histone-lysine N-methyltransferase Smyd1 (Smyd1) (Mus musculus (Mouse)).